Consider the following 129-residue polypeptide: uncharacterized protein (129 aa).

The segment covering 85–108 (SSAADSDDSSSCSECDSDALLSDD) has biased composition (low complexity). Positions 85 to 110 (SSAADSDDSSSCSECDSDALLSDDGP) are disordered.

This is an uncharacterized protein from Microplitis demolitor (Parasitoid wasp).